Consider the following 540-residue polypeptide: Phosphoenolpyruvate carboxykinase (ATP) (540 aa).

R65 lines the substrate pocket. K87 is subject to N6-acetyllysine. Substrate-binding residues include Y207 and K213. ATP-binding positions include K213, H232, and G248–T256. 2 residues coordinate Mn(2+): K213 and H232. D269 serves as a coordination point for Mn(2+). ATP is bound by residues E297, R333, R449–I450, and T455. A substrate-binding site is contributed by R333. K523 carries the post-translational modification N6-acetyllysine.

It belongs to the phosphoenolpyruvate carboxykinase (ATP) family. In terms of assembly, monomer. The cofactor is Mn(2+).

It is found in the cytoplasm. The catalysed reaction is oxaloacetate + ATP = phosphoenolpyruvate + ADP + CO2. It functions in the pathway carbohydrate biosynthesis; gluconeogenesis. Involved in the gluconeogenesis. Catalyzes the conversion of oxaloacetate (OAA) to phosphoenolpyruvate (PEP) through direct phosphoryl transfer between the nucleoside triphosphate and OAA. The protein is Phosphoenolpyruvate carboxykinase (ATP) of Shigella dysenteriae serotype 1 (strain Sd197).